A 500-amino-acid polypeptide reads, in one-letter code: Cytochrome P450 11B2, mitochondrial (500 aa).

The N-terminal 24 residues, 1-24 (MALRVTADVWLARPWQCLHRTRAL), are a transit peptide targeting the mitochondrion. Residue Phe-381 participates in 21-hydroxyprogesterone binding. Position 447 (Cys-447) interacts with heme.

Belongs to the cytochrome P450 family. The cofactor is heme.

The protein resides in the mitochondrion inner membrane. It catalyses the reaction a steroid + 2 reduced [adrenodoxin] + O2 + 2 H(+) = an 11beta-hydroxysteroid + 2 oxidized [adrenodoxin] + H2O. It carries out the reaction 21-hydroxyprogesterone + 2 reduced [adrenodoxin] + O2 + 2 H(+) = corticosterone + 2 oxidized [adrenodoxin] + H2O. The enzyme catalyses corticosterone + 2 reduced [adrenodoxin] + O2 + 2 H(+) = 18-hydroxycorticosterone + 2 oxidized [adrenodoxin] + H2O. The catalysed reaction is 18-hydroxycorticosterone + 2 reduced [adrenodoxin] + O2 + 2 H(+) = aldosterone + 2 oxidized [adrenodoxin] + 2 H2O. It catalyses the reaction 11-deoxycortisol + 2 reduced [adrenodoxin] + O2 + 2 H(+) = cortisol + 2 oxidized [adrenodoxin] + H2O. It carries out the reaction 21-hydroxyprogesterone + 2 reduced [adrenodoxin] + O2 + 2 H(+) = 18-hydroxy-11-deoxycorticosterone + 2 oxidized [adrenodoxin] + H2O. The enzyme catalyses cortisol + 2 reduced [adrenodoxin] + O2 + 2 H(+) = 18-hydroxycortisol + 2 oxidized [adrenodoxin] + H2O. The catalysed reaction is 18-hydroxycortisol + 2 reduced [adrenodoxin] + O2 + 2 H(+) = 18-oxocortisol + 2 oxidized [adrenodoxin] + 2 H2O. It functions in the pathway steroid biosynthesis. In terms of biological role, a cytochrome P450 monooxygenase that catalyzes the biosynthesis of aldosterone, the main mineralocorticoid in the human body responsible for salt and water homeostasis, thus involved in blood pressure regulation, arterial hypertension, and the development of heart failure. Catalyzes three sequential oxidative reactions of 11-deoxycorticosterone (21-hydroxyprogesterone), namely 11-beta hydroxylation, followed by two successive oxidations at C18 yielding 18-hydroxy and then 18-oxo intermediates (that would not leave the enzyme active site during the consecutive hydroxylation reactions), ending with the formation of aldosterone. Can also produce 18-hydroxycortisol and 18-oxocortisol, derived from successive oxidations of cortisol at C18, normally found at very low levels, but significantly increased in primary aldosteronism, the most common form of secondary hypertension. Mechanistically, uses molecular oxygen inserting one oxygen atom into a substrate and reducing the second into a water molecule. Two electrons are provided by NADPH via a two-protein mitochondrial transfer system comprising flavoprotein FDXR (adrenodoxin/ferredoxin reductase) and nonheme iron-sulfur protein FDX1 or FDX2 (adrenodoxin/ferredoxin). Could also be involved in the androgen metabolic pathway. The polypeptide is Cytochrome P450 11B2, mitochondrial (Cyp11b2) (Mus musculus (Mouse)).